Consider the following 458-residue polypeptide: tRNA modification GTPase MnmE (458 aa).

3 residues coordinate (6S)-5-formyl-5,6,7,8-tetrahydrofolate: arginine 26, glutamate 88, and arginine 127. Positions 224-378 (GLSTAIIGRP…IEDRINQLFF (155 aa)) constitute a TrmE-type G domain. Asparagine 234 lines the K(+) pocket. Residues 234 to 239 (NVGKSS), 253 to 259 (TDIAGTT), and 278 to 281 (DTAG) each bind GTP. Serine 238 is a binding site for Mg(2+). 3 residues coordinate K(+): threonine 253, isoleucine 255, and threonine 258. Threonine 259 is a Mg(2+) binding site. Residue lysine 458 participates in (6S)-5-formyl-5,6,7,8-tetrahydrofolate binding.

This sequence belongs to the TRAFAC class TrmE-Era-EngA-EngB-Septin-like GTPase superfamily. TrmE GTPase family. As to quaternary structure, homodimer. Heterotetramer of two MnmE and two MnmG subunits. Requires K(+) as cofactor.

It localises to the cytoplasm. In terms of biological role, exhibits a very high intrinsic GTPase hydrolysis rate. Involved in the addition of a carboxymethylaminomethyl (cmnm) group at the wobble position (U34) of certain tRNAs, forming tRNA-cmnm(5)s(2)U34. This chain is tRNA modification GTPase MnmE, found in Streptococcus pyogenes serotype M28 (strain MGAS6180).